The following is a 195-amino-acid chain: Imidazoleglycerol-phosphate dehydratase (195 aa).

It belongs to the imidazoleglycerol-phosphate dehydratase family.

The protein localises to the cytoplasm. The enzyme catalyses D-erythro-1-(imidazol-4-yl)glycerol 3-phosphate = 3-(imidazol-4-yl)-2-oxopropyl phosphate + H2O. Its pathway is amino-acid biosynthesis; L-histidine biosynthesis; L-histidine from 5-phospho-alpha-D-ribose 1-diphosphate: step 6/9. The sequence is that of Imidazoleglycerol-phosphate dehydratase from Heliobacterium modesticaldum (strain ATCC 51547 / Ice1).